Here is a 524-residue protein sequence, read N- to C-terminus: Chromosomal replication initiator protein DnaA (524 aa).

A domain I, interacts with DnaA modulators region spans residues 1–73 (MELPESAWEQ…DELLSSADHH (73 aa)). Residues 73–187 (HPITSVEISV…DVEGGLQHKS (115 aa)) are domain II. 3 stretches are compositionally biased toward polar residues: residues 86–95 (RSTSFETNQG), 106–126 (APRQ…QPQQ), and 153–165 (NGYN…QPYN). The disordered stretch occupies residues 86-173 (RSTSFETNQG…YNDNPMGQGK (88 aa)). The interval 188 to 404 (NLNPTFIFDN…GALKRVIANA (217 aa)) is domain III, AAA+ region. ATP-binding residues include glycine 232, glycine 234, lysine 235, and threonine 236. Residues 405-524 (HFTGRDISVE…VKNLLRTLTT (120 aa)) form a domain IV, binds dsDNA region.

Belongs to the DnaA family. Oligomerizes as a right-handed, spiral filament on DNA at oriC.

The protein resides in the cytoplasm. Functionally, plays an essential role in the initiation and regulation of chromosomal replication. ATP-DnaA binds to the origin of replication (oriC) to initiate formation of the DNA replication initiation complex once per cell cycle. Binds the DnaA box (a 9 base pair repeat at the origin) and separates the double-stranded (ds)DNA. Forms a right-handed helical filament on oriC DNA; dsDNA binds to the exterior of the filament while single-stranded (ss)DNA is stabiized in the filament's interior. The ATP-DnaA-oriC complex binds and stabilizes one strand of the AT-rich DNA unwinding element (DUE), permitting loading of DNA polymerase. After initiation quickly degrades to an ADP-DnaA complex that is not apt for DNA replication. Binds acidic phospholipids. The polypeptide is Chromosomal replication initiator protein DnaA (Saccharophagus degradans (strain 2-40 / ATCC 43961 / DSM 17024)).